Reading from the N-terminus, the 631-residue chain is Probable protein phosphatase 2C 31 (631 aa).

Disordered regions lie at residues G119–F142 and L205–N231. A compositionally biased stretch (polar residues) spans A131–D140. The PPM-type phosphatase domain occupies D221–F622. Residues D261 and G262 each coordinate Mn(2+). The interval G324–D347 is disordered. Mn(2+) contacts are provided by D550 and D613.

It belongs to the PP2C family. The cofactor is Mg(2+). It depends on Mn(2+) as a cofactor.

The enzyme catalyses O-phospho-L-seryl-[protein] + H2O = L-seryl-[protein] + phosphate. It carries out the reaction O-phospho-L-threonyl-[protein] + H2O = L-threonyl-[protein] + phosphate. This Oryza sativa subsp. japonica (Rice) protein is Probable protein phosphatase 2C 31.